Here is a 776-residue protein sequence, read N- to C-terminus: 1,4-alpha-glucan branching enzyme GlgB (776 aa).

The active-site Nucleophile is Asp431. The Proton donor role is filled by Glu484.

Belongs to the glycosyl hydrolase 13 family. GlgB subfamily. In terms of assembly, monomer.

It catalyses the reaction Transfers a segment of a (1-&gt;4)-alpha-D-glucan chain to a primary hydroxy group in a similar glucan chain.. It functions in the pathway glycan biosynthesis; glycogen biosynthesis. In terms of biological role, catalyzes the formation of the alpha-1,6-glucosidic linkages in glycogen by scission of a 1,4-alpha-linked oligosaccharide from growing alpha-1,4-glucan chains and the subsequent attachment of the oligosaccharide to the alpha-1,6 position. The polypeptide is 1,4-alpha-glucan branching enzyme GlgB (Trichodesmium erythraeum (strain IMS101)).